Reading from the N-terminus, the 332-residue chain is Casein kinase II subunit alpha (332 aa).

A Protein kinase domain is found at 34–319 (YEVVRKVGRG…ALEAMTHPYF (286 aa)). ATP is bound by residues 40–48 (VGRGKYSEV) and lysine 63. Residue aspartate 151 is the Proton acceptor of the active site.

It belongs to the protein kinase superfamily. Ser/Thr protein kinase family. CK2 subfamily. Tetramer of two alpha and two beta chains (possible).

It catalyses the reaction L-seryl-[protein] + ATP = O-phospho-L-seryl-[protein] + ADP + H(+). It carries out the reaction L-threonyl-[protein] + ATP = O-phospho-L-threonyl-[protein] + ADP + H(+). Functionally, casein kinases are operationally defined by their preferential utilization of acidic proteins such as caseins as substrates. The alpha chain contains the catalytic site. This is Casein kinase II subunit alpha (ACK2) from Zea mays (Maize).